The sequence spans 392 residues: Stilbene synthase 1 (392 aa).

55–58 (KFNR) contacts substrate. C164 is an active-site residue. Substrate-binding positions include L267 and 305–307 (GGP).

The protein belongs to the thiolase-like superfamily. Chalcone/stilbene synthases family. In terms of assembly, homodimer. In leaves, expressed in palisade and spongy parenchyma cells and, to a lesser extent, in epidermal cells after induction.

Its subcellular location is the cytoplasm. It carries out the reaction 4-coumaroyl-CoA + 3 malonyl-CoA + 3 H(+) = trans-resveratrol + 4 CO2 + 4 CoA. It participates in phytoalexin biosynthesis; 3,4',5-trihydroxystilbene biosynthesis; 3,4',5-trihydroxystilbene from trans-4-coumarate: step 2/2. Functionally, mediates resistance to pathogens which are sensitive to stilbenes such as Botrytis cinerea, Eutypa lata and Plasmopora viticola by enhancing the production of phytoalexins. Confers resistance to Phytophthora palmivora when expressed in papaya. This Vitis vinifera (Grape) protein is Stilbene synthase 1 (VINST1).